A 257-amino-acid polypeptide reads, in one-letter code: uncharacterized protein (257 aa).

The chain crosses the membrane as a helical span at residues 6-26 (IFWLNLAAIIIISIVVSGGMF).

The protein belongs to the staphylococcal tandem lipoprotein family.

The protein resides in the cell membrane. This is an uncharacterized protein from Staphylococcus aureus (strain N315).